We begin with the raw amino-acid sequence, 231 residues long: Trypsin (231 aa).

Positions Phe1 to Lys8 are cleaved as a propeptide — activation peptide. One can recognise a Peptidase S1 domain in the interval Ile9–Ala229. Intrachain disulfides connect Cys15-Cys145, Cys33-Cys49, Cys117-Cys218, Cys124-Cys191, Cys156-Cys170, and Cys181-Cys205. His48 (charge relay system) is an active-site residue. 4 residues coordinate Ca(2+): Glu60, Asn62, Val65, and Glu70. The active-site Charge relay system is Asp92. The active-site Charge relay system is the Ser185.

This sequence belongs to the peptidase S1 family. Ca(2+) serves as cofactor.

Its subcellular location is the secreted. The protein localises to the extracellular space. The catalysed reaction is Preferential cleavage: Arg-|-Xaa, Lys-|-Xaa.. This Sus scrofa (Pig) protein is Trypsin.